Here is a 386-residue protein sequence, read N- to C-terminus: Histidinol-phosphate aminotransferase (386 aa).

Lys-240 carries the N6-(pyridoxal phosphate)lysine modification.

This sequence belongs to the class-II pyridoxal-phosphate-dependent aminotransferase family. Histidinol-phosphate aminotransferase subfamily. Homodimer. Requires pyridoxal 5'-phosphate as cofactor.

It catalyses the reaction L-histidinol phosphate + 2-oxoglutarate = 3-(imidazol-4-yl)-2-oxopropyl phosphate + L-glutamate. The protein operates within amino-acid biosynthesis; L-histidine biosynthesis; L-histidine from 5-phospho-alpha-D-ribose 1-diphosphate: step 7/9. The polypeptide is Histidinol-phosphate aminotransferase (Bifidobacterium longum (strain NCC 2705)).